The sequence spans 291 residues: Segregation and condensation protein B (291 aa).

The protein belongs to the ScpB family. In terms of assembly, homodimer. Homodimerization may be required to stabilize the binding of ScpA to the Smc head domains. Component of a cohesin-like complex composed of ScpA, ScpB and the Smc homodimer, in which ScpA and ScpB bind to the head domain of Smc. The presence of the three proteins is required for the association of the complex with DNA.

The protein localises to the cytoplasm. Functionally, participates in chromosomal partition during cell division. May act via the formation of a condensin-like complex containing Smc and ScpA that pull DNA away from mid-cell into both cell halves. In Mycoplasmoides gallisepticum (strain R(low / passage 15 / clone 2)) (Mycoplasma gallisepticum), this protein is Segregation and condensation protein B.